The sequence spans 142 residues: Deoxyuridine 5'-triphosphate nucleotidohydrolase (142 aa).

Substrate contacts are provided by residues 62–64 (RSG), asparagine 75, and 79–81 (TID).

It belongs to the dUTPase family. Mg(2+) is required as a cofactor.

The catalysed reaction is dUTP + H2O = dUMP + diphosphate + H(+). Its pathway is pyrimidine metabolism; dUMP biosynthesis; dUMP from dCTP (dUTP route): step 2/2. This enzyme is involved in nucleotide metabolism: it produces dUMP, the immediate precursor of thymidine nucleotides and it decreases the intracellular concentration of dUTP so that uracil cannot be incorporated into DNA. The polypeptide is Deoxyuridine 5'-triphosphate nucleotidohydrolase (Clostridium novyi (strain NT)).